Reading from the N-terminus, the 182-residue chain is Prorelaxin (182 aa).

An N-terminal signal peptide occupies residues 1-25 (MRRLFLSHVLGAWLLLSQLPRELSG). Pyrrolidone carboxylic acid is present on glutamine 26. Cystine bridges form between cysteine 35–cysteine 169, cysteine 47–cysteine 182, and cysteine 168–cysteine 173. The propeptide at 54–156 (KTVLRLEEPG…LKNLGLDKHS (103 aa)) is connecting peptide. The propeptide occupies 161 to 162 (MI). Pyrrolidone carboxylic acid is present on glutamine 163.

Belongs to the insulin family. Heterodimer of a B chain and an A chain linked by two disulfide bonds.

It is found in the secreted. Its function is as follows. Relaxin is an ovarian hormone that acts with estrogen to produce dilatation of the birth canal in many mammals. The protein is Prorelaxin (RLN) of Equus caballus (Horse).